Reading from the N-terminus, the 191-residue chain is Holliday junction branch migration complex subunit RuvA (191 aa).

The tract at residues 1 to 63 is domain I; the sequence is MIRYLRGLVL…EEGLSLYGFP (63 aa). The tract at residues 64–136 is domain II; it reads DEENLALFEL…LKGKVPPHLL (73 aa). Residues 136–140 are flexible linker; the sequence is LAGEK. The domain III stretch occupies residues 141 to 191; sequence VESEAAEEAVMALAALGFKEAQARAVVLDLLAQNPKARAQDLIKEALKRLR.

The protein belongs to the RuvA family. As to quaternary structure, homotetramer. Forms an RuvA(8)-RuvB(12)-Holliday junction (HJ) complex. HJ DNA is sandwiched between 2 RuvA tetramers; dsDNA enters through RuvA and exits via RuvB. An RuvB hexamer assembles on each DNA strand where it exits the tetramer. Each RuvB hexamer is contacted by two RuvA subunits (via domain III) on 2 adjacent RuvB subunits; this complex drives branch migration. In the full resolvosome a probable DNA-RuvA(4)-RuvB(12)-RuvC(2) complex forms which resolves the HJ.

Its subcellular location is the cytoplasm. Functionally, the RuvA-RuvB-RuvC complex processes Holliday junction (HJ) DNA during genetic recombination and DNA repair, while the RuvA-RuvB complex plays an important role in the rescue of blocked DNA replication forks via replication fork reversal (RFR). RuvA specifically binds to HJ cruciform DNA, conferring on it an open structure. The RuvB hexamer acts as an ATP-dependent pump, pulling dsDNA into and through the RuvAB complex. HJ branch migration allows RuvC to scan DNA until it finds its consensus sequence, where it cleaves and resolves the cruciform DNA. The polypeptide is Holliday junction branch migration complex subunit RuvA (Thermus thermophilus (strain ATCC BAA-163 / DSM 7039 / HB27)).